Consider the following 429-residue polypeptide: 3-phosphoshikimate 1-carboxyvinyltransferase (429 aa).

3-phosphoshikimate is bound by residues Lys20, Ser21, and Arg25. A phosphoenolpyruvate-binding site is contributed by Lys20. 2 residues coordinate phosphoenolpyruvate: Gly89 and Arg118. 3-phosphoshikimate contacts are provided by Ser164, Ser165, Gln166, Ser192, Asp311, and Lys338. Residue Gln166 participates in phosphoenolpyruvate binding. The active-site Proton acceptor is Asp311. 2 residues coordinate phosphoenolpyruvate: Arg342 and Arg384.

It belongs to the EPSP synthase family. Monomer.

The protein localises to the cytoplasm. It carries out the reaction 3-phosphoshikimate + phosphoenolpyruvate = 5-O-(1-carboxyvinyl)-3-phosphoshikimate + phosphate. The protein operates within metabolic intermediate biosynthesis; chorismate biosynthesis. Functionally, catalyzes the transfer of the enolpyruvyl moiety of phosphoenolpyruvate (PEP) to the 5-hydroxyl of shikimate-3-phosphate (S3P) to produce enolpyruvyl shikimate-3-phosphate and inorganic phosphate. This Methanococcus maripaludis (strain C6 / ATCC BAA-1332) protein is 3-phosphoshikimate 1-carboxyvinyltransferase.